The sequence spans 802 residues: Pyrophosphate-energized membrane proton pump 2 (802 aa).

6 consecutive transmembrane segments (helical) span residues V45–S65, P66–T86, Y118–F138, V160–V180, A206–Y226, and L246–L266. K273 lines the substrate pocket. Residues D276, D280, and D306 each contribute to the Mg(2+) site. The next 5 membrane-spanning stretches (helical) occupy residues F348–L368, M386–A406, W421–I441, I468–V488, and G511–L531. D541 and N568 together coordinate Mg(2+). 4 helical membrane-spanning segments follow: residues F577 to V597, V615 to A635, G686 to Y706, and V716 to N736. Mg(2+) contacts are provided by D743 and D773. Position 776 (K776) interacts with substrate. The helical transmembrane segment at S782–L802 threads the bilayer.

It belongs to the H(+)-translocating pyrophosphatase (TC 3.A.10) family. K(+)-insensitive subfamily. Monomer. In terms of tissue distribution, ubiquitous. Mostly expressed in cotyledons, roots and flowers. Especially high levels in trichomes, sepals and stamen filaments.

The protein localises to the golgi apparatus membrane. The catalysed reaction is diphosphate + H2O + H(+)(in) = 2 phosphate + 2 H(+)(out). Its activity is regulated as follows. Activated by Mg(+) but not by K(+). Inhibited by Ca(2+). Pyrophosphatase active in both inorganic pyrophosphate hydrolysis and H(+) translocation. In Arabidopsis thaliana (Mouse-ear cress), this protein is Pyrophosphate-energized membrane proton pump 2 (AVPL1).